Here is a 754-residue protein sequence, read N- to C-terminus: Phosphatidylinositol 4-phosphate 5-kinase 7 (754 aa).

8 MORN repeats span residues 16–38, 39–61, 62–84, 85–107, 108–130, 131–153, 154–176, and 177–198; these read YSGE…DGTI, YEGD…SGAK, YEGD…DESV, YSGA…NSDL, YDGL…NGNR, YIGN…NGDL, YDGF…DGCL, and YYGT…AGTK. The PIPK domain occupies 329–750; the sequence is GEHNYYLMLN…RFVNFLHKVF (422 aa). The activation loop stretch occupies residues 710–731; the sequence is YNTKKKVEHTCKSLQYDPMTIS.

It carries out the reaction a 1,2-diacyl-sn-glycero-3-phospho-(1D-myo-inositol 4-phosphate) + ATP = a 1,2-diacyl-sn-glycero-3-phospho-(1D-myo-inositol-4,5-bisphosphate) + ADP + H(+). The polypeptide is Phosphatidylinositol 4-phosphate 5-kinase 7 (PIP5K7) (Arabidopsis thaliana (Mouse-ear cress)).